Consider the following 30-residue polypeptide: Ornithine carbamoyltransferase, catabolic (30 aa).

Belongs to the aspartate/ornithine carbamoyltransferase superfamily. OTCase family.

Its subcellular location is the cytoplasm. It carries out the reaction carbamoyl phosphate + L-ornithine = L-citrulline + phosphate + H(+). Its pathway is amino-acid degradation; L-arginine degradation via ADI pathway; carbamoyl phosphate from L-arginine: step 2/2. The polypeptide is Ornithine carbamoyltransferase, catabolic (arcB) (Aeromonas caviae (Aeromonas punctata)).